The primary structure comprises 186 residues: Dihydrofolate reductase (186 aa).

One can recognise a DHFR domain in the interval 3 to 183 (KFSLIVAVCA…IQYQYRIYEK (181 aa)). NADP(+) contacts are provided by residues Ala-9 and 15–21 (GIGIKGD). Substrate is bound at residue 29–34 (ELKYFS). Residue 53 to 55 (RKT) participates in NADP(+) binding. Arg-69 is a substrate binding site. NADP(+) is bound by residues 75–77 (TRD) and 116–123 (GGNAVYKE).

The protein belongs to the dihydrofolate reductase family.

It catalyses the reaction (6S)-5,6,7,8-tetrahydrofolate + NADP(+) = 7,8-dihydrofolate + NADPH + H(+). Its pathway is cofactor biosynthesis; tetrahydrofolate biosynthesis; 5,6,7,8-tetrahydrofolate from 7,8-dihydrofolate: step 1/1. In terms of biological role, key enzyme in folate metabolism. Catalyzes an essential reaction for de novo glycine and purine synthesis, and for DNA precursor synthesis. This Aedes albopictus (Asian tiger mosquito) protein is Dihydrofolate reductase (DHFR).